The primary structure comprises 202 residues: Stress enhanced protein 2, chloroplastic (202 aa).

Residues 1–60 (MAMATRAIRYQLPSPRFRAPRCESSEPIKQIQIQQRPRGGDLAENGKIVLQPRLCTLRSY) constitute a chloroplast transit peptide. 2 helical membrane-spanning segments follow: residues 111–131 (LAMI…NSLF) and 142–162 (AIGA…LTIS).

It belongs to the ELIP/psbS family.

The protein resides in the plastid. The protein localises to the chloroplast thylakoid membrane. Its function is as follows. May be involved in non-photochemical quenching, a process that maintains the balance between dissipation and utilization of light energy to minimize generation of oxidizing molecules, thereby protecting the plant against photo-oxidative damage. May play a photoprotective role in the thylakoid membrane in response to light stress. This chain is Stress enhanced protein 2, chloroplastic, found in Arabidopsis thaliana (Mouse-ear cress).